The following is a 122-amino-acid chain: Large ribosomal subunit protein uL14c (122 aa).

The protein belongs to the universal ribosomal protein uL14 family. In terms of assembly, part of the 50S ribosomal subunit.

The protein resides in the plastid. It is found in the chloroplast. Its function is as follows. Binds to 23S rRNA. The sequence is that of Large ribosomal subunit protein uL14c from Cucumis sativus (Cucumber).